A 439-amino-acid polypeptide reads, in one-letter code: Trigger factor (439 aa).

Residues 163-248 (GDRVTIDYRG…LNKLEAPKLP (86 aa)) form the PPIase FKBP-type domain.

This sequence belongs to the FKBP-type PPIase family. Tig subfamily.

The protein localises to the cytoplasm. It catalyses the reaction [protein]-peptidylproline (omega=180) = [protein]-peptidylproline (omega=0). Involved in protein export. Acts as a chaperone by maintaining the newly synthesized protein in an open conformation. Functions as a peptidyl-prolyl cis-trans isomerase. The chain is Trigger factor from Nitrosomonas europaea (strain ATCC 19718 / CIP 103999 / KCTC 2705 / NBRC 14298).